The primary structure comprises 281 residues: Protein phosphatase 2C homolog 1 (281 aa).

A PPM-type phosphatase domain is found at 20-281 (RVGVAENKNS…DNVTVMVVFL (262 aa)). The Mn(2+) site is built by aspartate 58, glycine 59, aspartate 233, and aspartate 272.

It belongs to the PP2C family. Interacts with NBP2 and PBS2. Mg(2+) serves as cofactor. Mn(2+) is required as a cofactor.

Its subcellular location is the peroxisome. The enzyme catalyses O-phospho-L-seryl-[protein] + H2O = L-seryl-[protein] + phosphate. It carries out the reaction O-phospho-L-threonyl-[protein] + H2O = L-threonyl-[protein] + phosphate. Serine and threonine phosphatase. Involved in tRNA splicing and cell separation. This chain is Protein phosphatase 2C homolog 1 (PTC1), found in Saccharomyces cerevisiae (strain ATCC 204508 / S288c) (Baker's yeast).